Here is a 1465-residue protein sequence, read N- to C-terminus: DNA polymerase III PolC-type (1465 aa).

Residues 427–583 form the Exonuclease domain; the sequence is YVVFDVETTG…YDAEATGRLL (157 aa).

It belongs to the DNA polymerase type-C family. PolC subfamily.

The protein resides in the cytoplasm. The catalysed reaction is DNA(n) + a 2'-deoxyribonucleoside 5'-triphosphate = DNA(n+1) + diphosphate. Required for replicative DNA synthesis. This DNA polymerase also exhibits 3' to 5' exonuclease activity. The chain is DNA polymerase III PolC-type from Streptococcus pyogenes serotype M4 (strain MGAS10750).